A 165-amino-acid chain; its full sequence is Destrin (165 aa).

Position 2 is an N-acetylalanine (alanine 2). Serine 3 carries the phosphoserine modification. An ADF-H domain is found at 4–153; the sequence is GVQVADEVCR…NRTSIAEKLG (150 aa). Lysine 19 carries the N6-acetyllysine modification. Residues 30–34 carry the Nuclear localization signal motif; it reads KKRKK.

Belongs to the actin-binding proteins ADF family. Post-translationally, ISGylated.

Actin-depolymerizing protein. Severs actin filaments (F-actin) and binds to actin monomers (G-actin). Acts in a pH-independent manner. This chain is Destrin (Dstn), found in Rattus norvegicus (Rat).